The sequence spans 193 residues: dCTP deaminase (193 aa).

DCTP contacts are provided by residues 110 to 115 (RSSLAR), aspartate 128, 136 to 138 (VLE), tyrosine 171, lysine 178, and glutamine 182. Glutamate 138 acts as the Proton donor/acceptor in catalysis. The tract at residues 169 to 193 (RPYNRRQDAKYRDQQGAVASRIDKD) is disordered.

Belongs to the dCTP deaminase family. As to quaternary structure, homotrimer.

It catalyses the reaction dCTP + H2O + H(+) = dUTP + NH4(+). The protein operates within pyrimidine metabolism; dUMP biosynthesis; dUMP from dCTP (dUTP route): step 1/2. Catalyzes the deamination of dCTP to dUTP. This is dCTP deaminase from Cronobacter sakazakii (strain ATCC BAA-894) (Enterobacter sakazakii).